The sequence spans 686 residues: MSKIRVHEYAKKHNISSKDLMTKLKEMNIEVSNHMTMLDDEVVNKLDNEYQTEKPSVADEFEVEEKVVRSKKNSNKKKKKGKGNEDKRQENFAGRQQTQIVETPDKITFSGSLTVGDLAKKLSKEPSEIIKKLFMLGIMATINQDLDKDTIELIANDYGIEVEEEVIVSETEFETFIDEQDDEENLKERPAVVTIMGHVDHGKTTLLDSIRNSKVTAGEAGGITQHIGAYQVEVNDKKITFLDTPGHAAFTTMRARGAQVTDITILVVAADDGVMPQTVEAINHAKAAGVPIIVAVNKMDKPAANPDRVMQELTEYELVPEAWGGDTIFVPISAIQGEGIDNLLEMILLVSEVEEYKANPNRYATGTVIEAQLDKGKGTIATLLVQNGTLRVGDPIVVGTSFGRVRAMVSDIGRRVKVAGPSTPVEITGLNEVPQAGDRFMAFADEKKARQIGESRAQEALVAQRGEKSKLSLEDLFQQIQEGDVKEINLIVKADVQGSVEAMAASLRKIDVEGVKVKIIHTGVGAITESDIILASASNAIVIGFNVRPDVNAKRTAELENVDIRLHRIIYKVIEEIEAAMQGMLDPEFEEKVIGQAEVRQTFKVTKVGTIAGCYVTDGKITRDSGVRIIRDGVVIFEGQLDTLKRFKDDVKEVAQNYECGITIERYNDLKEGDIIEAYIMEEVKR.

Positions 61 to 98 are disordered; the sequence is FEVEEKVVRSKKNSNKKKKKGKGNEDKRQENFAGRQQT. The segment covering 69–81 has biased composition (basic residues); the sequence is RSKKNSNKKKKKG. A tr-type G domain is found at 188–357; that stretch reads ERPAVVTIMG…LLVSEVEEYK (170 aa). A G1 region spans residues 197–204; that stretch reads GHVDHGKT. 197–204 serves as a coordination point for GTP; it reads GHVDHGKT. Residues 222–226 are G2; the sequence is GITQH. A G3 region spans residues 243-246; that stretch reads DTPG. Residues 243–247 and 297–300 contribute to the GTP site; these read DTPGH and NKMD. The G4 stretch occupies residues 297–300; that stretch reads NKMD. Residues 333-335 are G5; it reads SAI.

Belongs to the TRAFAC class translation factor GTPase superfamily. Classic translation factor GTPase family. IF-2 subfamily.

The protein localises to the cytoplasm. Its function is as follows. One of the essential components for the initiation of protein synthesis. Protects formylmethionyl-tRNA from spontaneous hydrolysis and promotes its binding to the 30S ribosomal subunits. Also involved in the hydrolysis of GTP during the formation of the 70S ribosomal complex. This Bacillus cereus (strain B4264) protein is Translation initiation factor IF-2.